The primary structure comprises 380 residues: Cytochrome b (380 aa).

A run of 4 helical transmembrane segments spans residues 34-54 (FGSLLAVCLMTQILTGLLLAM), 78-99 (WLIRNLHANGASFFFICIFLHI), 114-134 (WNTGVILLLTLMATAFVGYVL), and 179-199 (FFALHFLLPFAIAGITVVHLT). Heme b is bound by residues histidine 84 and histidine 98. 2 residues coordinate heme b: histidine 183 and histidine 197. An a ubiquinone-binding site is contributed by histidine 202. Helical transmembrane passes span 227 to 247 (LKDILGLTLMLTPFLTLALFS), 289 to 309 (LGGVLALAASVLILFLIPFLH), 321 to 341 (LSQTLFWLLVANLLILTWIGS), and 348 to 368 (FMIIGQMASLSYFTILLILFP).

This sequence belongs to the cytochrome b family. In terms of assembly, the cytochrome bc1 complex contains 11 subunits: 3 respiratory subunits (MT-CYB, CYC1 and UQCRFS1), 2 core proteins (UQCRC1 and UQCRC2) and 6 low-molecular weight proteins (UQCRH/QCR6, UQCRB/QCR7, UQCRQ/QCR8, UQCR10/QCR9, UQCR11/QCR10 and a cleavage product of UQCRFS1). This cytochrome bc1 complex then forms a dimer. Heme b is required as a cofactor.

Its subcellular location is the mitochondrion inner membrane. Its function is as follows. Component of the ubiquinol-cytochrome c reductase complex (complex III or cytochrome b-c1 complex) that is part of the mitochondrial respiratory chain. The b-c1 complex mediates electron transfer from ubiquinol to cytochrome c. Contributes to the generation of a proton gradient across the mitochondrial membrane that is then used for ATP synthesis. The polypeptide is Cytochrome b (MT-CYB) (Gallus lafayettii (Sri Lanka junglefowl)).